The sequence spans 254 residues: Probable transcriptional regulator ycf27 (254 aa).

In terms of domain architecture, Response regulatory spans 16–129 (KVLIVDDEAS…ELEARIRAVL (114 aa)). The residue at position 65 (Asp65) is a 4-aspartylphosphate. Positions 85–103 (DVPIIMLTALGDVADRITG) form a DNA-binding region, H-T-H motif. A DNA-binding region (ompR/PhoB-type) is located at residues 144–245 (SGIINFNFLT…ARGTGYLFQR (102 aa)).

The protein resides in the plastid. It localises to the chloroplast. Functionally, probable promoter-specific protein mediating the interaction between DNA and RNA polymerase. The chain is Probable transcriptional regulator ycf27 (ycf27) from Guillardia theta (Cryptophyte).